The primary structure comprises 444 residues: tRNA-2-methylthio-N(6)-dimethylallyladenosine synthase (444 aa).

The 115-residue stretch at Lys7–Arg121 folds into the MTTase N-terminal domain. Residues Cys16, Cys52, Cys84, Cys158, Cys162, and Cys165 each coordinate [4Fe-4S] cluster. Positions Gly144–Ala376 constitute a Radical SAM core domain. The TRAM domain maps to Glu379–Met441.

It belongs to the methylthiotransferase family. MiaB subfamily. In terms of assembly, monomer. [4Fe-4S] cluster serves as cofactor.

It localises to the cytoplasm. It catalyses the reaction N(6)-dimethylallyladenosine(37) in tRNA + (sulfur carrier)-SH + AH2 + 2 S-adenosyl-L-methionine = 2-methylsulfanyl-N(6)-dimethylallyladenosine(37) in tRNA + (sulfur carrier)-H + 5'-deoxyadenosine + L-methionine + A + S-adenosyl-L-homocysteine + 2 H(+). In terms of biological role, catalyzes the methylthiolation of N6-(dimethylallyl)adenosine (i(6)A), leading to the formation of 2-methylthio-N6-(dimethylallyl)adenosine (ms(2)i(6)A) at position 37 in tRNAs that read codons beginning with uridine. This is tRNA-2-methylthio-N(6)-dimethylallyladenosine synthase from Sphingopyxis alaskensis (strain DSM 13593 / LMG 18877 / RB2256) (Sphingomonas alaskensis).